The following is a 457-amino-acid chain: ADP-dependent glucose/glucosamine kinase (457 aa).

Residues 5 to 457 (TNWESLYEKA…SAFVSEFSLH (453 aa)) enclose the ADPK domain. Residues D37, E91, 115 to 116 (GQ), and H179 contribute to the D-glucose site. E269 contacts Mg(2+). N295 contributes to the ADP binding site. Position 298 (E298) interacts with Mg(2+). Residues 345 to 346 (HT), V432, and G442 each bind ADP. Residue D443 participates in D-glucose binding. A Mg(2+)-binding site is contributed by D443. D443 acts as the Proton acceptor in catalysis.

The protein belongs to the ADP-dependent glucokinase family. It depends on Mg(2+) as a cofactor.

Its subcellular location is the cytoplasm. It catalyses the reaction D-glucose + ADP = D-glucose 6-phosphate + AMP + H(+). The catalysed reaction is D-glucosamine + ADP = D-glucosamine 6-phosphate + AMP + H(+). The protein operates within carbohydrate degradation; glycolysis. Inhibited by 8-bromoadenosine phosphate (8-Br-AMP). Catalyzes the ADP-dependent phosphorylation of D-glucose to D-glucose 6-phosphate and glucosamine to glucosamine 6-phosphate. This Pyrococcus horikoshii (strain ATCC 700860 / DSM 12428 / JCM 9974 / NBRC 100139 / OT-3) protein is ADP-dependent glucose/glucosamine kinase.